The sequence spans 1529 residues: DNA (cytosine-5)-methyltransferase 1B (1529 aa).

Disordered regions lie at residues 1 to 56 and 674 to 706; these read MVKS…RAAC and DDEL…TRSR. Residues 21-35 show a composition bias toward basic and acidic residues; it reads QKKDEDTTDKGKLDE. Positions 674–694 are enriched in acidic residues; that stretch reads DDELEENEDEDAEEEAQIEEE. Residues 697–706 are compositionally biased toward polar residues; sequence SKTPPSTRSR. BAH domains lie at 741-873 and 910-1049; these read LRIN…FSLP and ITYN…KQLP. Residues 1093-1527 enclose the SAM-dependent MTase C5-type domain; sequence LATLDIFAGC…RKLKEAVDAK (435 aa). Residue Cys-1198 is part of the active site.

The protein belongs to the class I-like SAM-binding methyltransferase superfamily. C5-methyltransferase family. Expressed in roots and inflorescences. Expressed in roots, panicles, anthers, pistils, endosperm and imbibed embryos. Expressed in tissues containing actively replicating and dividing cells, such as shoot and root meristems.

It is found in the nucleus. It carries out the reaction a 2'-deoxycytidine in DNA + S-adenosyl-L-methionine = a 5-methyl-2'-deoxycytidine in DNA + S-adenosyl-L-homocysteine + H(+). Its function is as follows. Major CG methylase that methylates chromatin CpG residues and maintains DNA methylation. Plays a major role in genomic imprinting, regulation of embryogenesis and seed viability. Maintains DNA methylation at the FIE1 gene locus in the embryo. The sequence is that of DNA (cytosine-5)-methyltransferase 1B (MET1B) from Oryza sativa subsp. japonica (Rice).